The primary structure comprises 207 residues: Large ribosomal subunit protein uL4 (207 aa).

The interval Lys-50 to Gly-76 is disordered.

This sequence belongs to the universal ribosomal protein uL4 family. Part of the 50S ribosomal subunit.

Functionally, one of the primary rRNA binding proteins, this protein initially binds near the 5'-end of the 23S rRNA. It is important during the early stages of 50S assembly. It makes multiple contacts with different domains of the 23S rRNA in the assembled 50S subunit and ribosome. Forms part of the polypeptide exit tunnel. This Rickettsia typhi (strain ATCC VR-144 / Wilmington) protein is Large ribosomal subunit protein uL4.